A 300-amino-acid chain; its full sequence is Probable endonuclease 4 (300 aa).

Residues histidine 68, histidine 109, glutamate 144, aspartate 178, histidine 181, histidine 213, aspartate 226, histidine 228, and glutamate 258 each coordinate Zn(2+).

This sequence belongs to the AP endonuclease 2 family. Zn(2+) serves as cofactor.

It carries out the reaction Endonucleolytic cleavage to 5'-phosphooligonucleotide end-products.. Functionally, endonuclease IV plays a role in DNA repair. It cleaves phosphodiester bonds at apurinic or apyrimidinic (AP) sites, generating a 3'-hydroxyl group and a 5'-terminal sugar phosphate. This Latilactobacillus sakei subsp. sakei (strain 23K) (Lactobacillus sakei subsp. sakei) protein is Probable endonuclease 4.